The primary structure comprises 370 residues: D-alanine--D-alanine ligase (370 aa).

Positions 144–352 (KKIFADAGIP…YGALIERLVD (209 aa)) constitute an ATP-grasp domain. 177–232 (EEVLTYPVFVKPANLGSSVGISKATNKKELADAMTEAFLYDRRVVVEQGVVAREIE) serves as a coordination point for ATP. Positions 306, 319, and 321 each coordinate Mg(2+).

Belongs to the D-alanine--D-alanine ligase family. Mg(2+) is required as a cofactor. The cofactor is Mn(2+).

Its subcellular location is the cytoplasm. The catalysed reaction is 2 D-alanine + ATP = D-alanyl-D-alanine + ADP + phosphate + H(+). Its pathway is cell wall biogenesis; peptidoglycan biosynthesis. Its function is as follows. Cell wall formation. The polypeptide is D-alanine--D-alanine ligase (Listeria monocytogenes serotype 4b (strain F2365)).